A 93-amino-acid polypeptide reads, in one-letter code: Progonadoliberin-2 (93 aa).

Residues 1 to 24 (MACQRHLLFLLLVLFAVSTQLSHG) form the signal peptide. The residue at position 25 (Gln-25) is a Pyrrolidone carboxylic acid. Gly-34 is modified (glycine amide).

Belongs to the GnRH family. In terms of tissue distribution, midbrain and hindbrain.

The protein localises to the secreted. Its function is as follows. Stimulates the secretion of gonadotropins. The polypeptide is Progonadoliberin-2 (gnrh2) (Aquarana catesbeiana (American bullfrog)).